The chain runs to 102 residues: Citrate lyase acyl carrier protein (102 aa).

O-(phosphoribosyl dephospho-coenzyme A)serine is present on S14.

Belongs to the CitD family. Oligomer with a subunit composition of (alpha,beta,gamma)6.

The protein localises to the cytoplasm. Covalent carrier of the coenzyme of citrate lyase. In Streptococcus equi subsp. zooepidemicus (strain H70), this protein is Citrate lyase acyl carrier protein.